Consider the following 187-residue polypeptide: Probable chorismate pyruvate-lyase (187 aa).

Substrate is bound by residues Arg-77, Leu-115, and Glu-174.

Belongs to the UbiC family.

The protein resides in the cytoplasm. The catalysed reaction is chorismate = 4-hydroxybenzoate + pyruvate. Its pathway is cofactor biosynthesis; ubiquinone biosynthesis. Removes the pyruvyl group from chorismate, with concomitant aromatization of the ring, to provide 4-hydroxybenzoate (4HB) for the ubiquinone pathway. The chain is Probable chorismate pyruvate-lyase from Shewanella sp. (strain ANA-3).